The chain runs to 378 residues: Flap endonuclease 1 (378 aa).

The tract at residues 1 to 104 (MGVKDLSKVI…SELEKRTERR (104 aa)) is N-domain. Asp34 contributes to the Mg(2+) binding site. Arg47 and Arg70 together coordinate DNA. Position 86 (Asp86) interacts with Mg(2+). Residues 90-113 (PQMKTSELEKRTERRTEAEKQRND) are disordered. The span at 95-113 (SELEKRTERRTEAEKQRND) shows a compositional bias: basic and acidic residues. The tract at residues 122–253 (SVNKFEKRLV…KKAFELIKKY (132 aa)) is I-domain. 4 residues coordinate Mg(2+): Glu158, Glu160, Asp179, and Asp181. Glu158 lines the DNA pocket. DNA is bound by residues Gly231 and Asp233. Asp233 lines the Mg(2+) pocket. Residues 336-344 (QQARIDSFF) are interaction with PCNA. Residues 348–378 (KVVTSETTKRKNEEKNNLKKRGPSLGKKAKK) are disordered. Over residues 354 to 364 (TTKRKNEEKNN) the composition is skewed to basic and acidic residues. Basic residues predominate over residues 365–378 (LKKRGPSLGKKAKK).

Belongs to the XPG/RAD2 endonuclease family. FEN1 subfamily. In terms of assembly, interacts with PCNA. Three molecules of FEN1 bind to one PCNA trimer with each molecule binding to one PCNA monomer. PCNA stimulates the nuclease activity without altering cleavage specificity. Requires Mg(2+) as cofactor. In terms of processing, phosphorylated. Phosphorylation upon DNA damage induces relocalization to the nuclear plasma.

The protein resides in the nucleus. The protein localises to the nucleolus. Its subcellular location is the nucleoplasm. It is found in the mitochondrion. Its function is as follows. Structure-specific nuclease with 5'-flap endonuclease and 5'-3' exonuclease activities involved in DNA replication and repair. During DNA replication, cleaves the 5'-overhanging flap structure that is generated by displacement synthesis when DNA polymerase encounters the 5'-end of a downstream Okazaki fragment. It enters the flap from the 5'-end and then tracks to cleave the flap base, leaving a nick for ligation. Also involved in the long patch base excision repair (LP-BER) pathway, by cleaving within the apurinic/apyrimidinic (AP) site-terminated flap. Acts as a genome stabilization factor that prevents flaps from equilibrating into structures that lead to duplications and deletions. Also possesses 5'-3' exonuclease activity on nicked or gapped double-stranded DNA, and exhibits RNase H activity. Also involved in replication and repair of rDNA and in repairing mitochondrial DNA. The polypeptide is Flap endonuclease 1 (Brugia malayi (Filarial nematode worm)).